We begin with the raw amino-acid sequence, 642 residues long: Nocturnin (642 aa).

Positions 50–87 (LEDDDKPPQLFSVTDEPPSPNEEDYKPPNHHEDDGKLA) are disordered. Positions 72–87 (EDYKPPNHHEDDGKLA) are enriched in basic and acidic residues. Glutamate 363 contributes to the Mg(2+) binding site. Substrate is bound by residues glutamate 363, asparagine 430, 453–456 (HLKA), 491–493 (DFN), and histidine 600. Residues 611 to 642 (PPTENGKESGSGSGSDGENETEVEGSKHGSIQ) form a disordered region.

Belongs to the CCR4/nocturin family. Associates to the CCR4-NOT complex composed of at least Pop2/Caf1-55, Ccr4, Not1, Rga/Not2, and Not3. It depends on Mg(2+) as a cofactor. Expressed in the head, in the dorsal neurons DN3, a subgroup of clock neurons (at protein level). Ubiquitously expressed in both males and females.

Its subcellular location is the cytoplasm. It catalyses the reaction NADP(+) + H2O = phosphate + NAD(+). The enzyme catalyses NADPH + H2O = phosphate + NADH. Functionally, phosphatase which catalyzes the conversion of NADP(+) to NAD(+) and of NADPH to NADH. Shows a small preference for NADPH over NADP(+). Because of its association with the CCR4-NOT complex, has a role in mRNA deadenylation and decay. Required at the pupal stage for proper wing morphogenesis after eclosion. Its function is as follows. Doesn't have a role in light-mediated behavioral response. In dorsal neurons, contributes to the light-mediated behavioral response. This chain is Nocturnin, found in Drosophila melanogaster (Fruit fly).